Consider the following 349-residue polypeptide: MRKIIHIDCDCFYAALEMRDDPSLRGKALAVGGSPDKRGVVATCSYEARAYGVRSAMAMRTALKLCPDLLVVRPRFDVYRAVSKQIHAIFRDYTELIEPLSLDEAYLDVSASPHFAGSATRIAQDIRRRVAEELRITVSAGVAPNKFLAKIASDWRKPDGLFVITPEQVDGFVAELPVAKLHGVGKVTAERLARMGIRTCADLRQGSKLSLVREFGSFGERLWSLAHGVDERPVEVDSRRQSVSVECTFDRDLPDLAACLEELPALLEELDGRLLRLDGSYRPDKPFVKLKFHDFTQTTLEQAGAGRDLDSYRQMLGQAFARGSRPVRLIGVGVRLLDLQGAHEQLRLF.

The region spanning 4-185 is the UmuC domain; sequence IIHIDCDCFY…LPVAKLHGVG (182 aa). Mg(2+) contacts are provided by aspartate 8 and aspartate 103. Glutamate 104 is an active-site residue.

This sequence belongs to the DNA polymerase type-Y family. Monomer. The cofactor is Mg(2+).

Its subcellular location is the cytoplasm. The enzyme catalyses DNA(n) + a 2'-deoxyribonucleoside 5'-triphosphate = DNA(n+1) + diphosphate. Poorly processive, error-prone DNA polymerase involved in untargeted mutagenesis. Copies undamaged DNA at stalled replication forks, which arise in vivo from mismatched or misaligned primer ends. These misaligned primers can be extended by PolIV. Exhibits no 3'-5' exonuclease (proofreading) activity. May be involved in translesional synthesis, in conjunction with the beta clamp from PolIII. This is DNA polymerase IV from Pseudomonas paraeruginosa (strain DSM 24068 / PA7) (Pseudomonas aeruginosa (strain PA7)).